We begin with the raw amino-acid sequence, 652 residues long: Meiotic sister-chromatid recombination protein 3 (652 aa).

Disordered stretches follow at residues 123 to 151, 304 to 406, 470 to 576, and 594 to 652; these read RTGTASSRGVGSRTGSMTGSVARVGSRTG, NNSK…SDQK, EQIQ…ESGA, and ATPV…INTK. Over residues 125 to 141 the composition is skewed to polar residues; that stretch reads GTASSRGVGSRTGSMTG. Positions 316-336 are enriched in low complexity; sequence VQKQGVQQQQEVQHQGISQVQ. Residues 337 to 361 show a composition bias toward polar residues; the sequence is NTEAKSVGRKSTMSKRMTLRDTPNA. Basic residues predominate over residues 380–390; that stretch reads TKRKSIFKSKK. Polar residues-rich tracts occupy residues 506–517 and 524–544; these read QFSQENSGNQPP and QYSQQPPDVAPSNGTTDNFDT. A compositionally biased stretch (low complexity) spans 545-569; it reads NASGHNINHNNNNHNNNNNTSSSSS. Residues 612–621 are compositionally biased toward polar residues; it reads SSPSIDNTPR. Positions 640–652 are enriched in basic residues; that stretch reads RLFKSNKTHINTK.

The protein resides in the cell membrane. In terms of biological role, may be involved in the control of meiotic sister-chromatid recombination. This chain is Meiotic sister-chromatid recombination protein 3 (MSC3), found in Kluyveromyces lactis (strain ATCC 8585 / CBS 2359 / DSM 70799 / NBRC 1267 / NRRL Y-1140 / WM37) (Yeast).